The primary structure comprises 372 residues: Serine proteinase inhibitor 1 (372 aa).

It belongs to the serpin family. Poxviruses subfamily.

The protein resides in the host cytoplasm. Functionally, plays a role in mediating viral host range. May act to inhibit a caspase independent form of apoptosis to allow efficient virus replication in infected cells. The sequence is that of Serine proteinase inhibitor 1 (OPG208) from Homo sapiens (Human).